We begin with the raw amino-acid sequence, 162 residues long: Phosphopantetheine adenylyltransferase (162 aa).

T9 lines the substrate pocket. Residues 9–10 (TF) and H17 contribute to the ATP site. Residues K41, L73, and R87 each contribute to the substrate site. ATP contacts are provided by residues 88-90 (GLR), E98, and 123-129 (LSYISSS).

This sequence belongs to the bacterial CoaD family. As to quaternary structure, homohexamer. It depends on Mg(2+) as a cofactor.

It is found in the cytoplasm. The catalysed reaction is (R)-4'-phosphopantetheine + ATP + H(+) = 3'-dephospho-CoA + diphosphate. Its pathway is cofactor biosynthesis; coenzyme A biosynthesis; CoA from (R)-pantothenate: step 4/5. Reversibly transfers an adenylyl group from ATP to 4'-phosphopantetheine, yielding dephospho-CoA (dPCoA) and pyrophosphate. This is Phosphopantetheine adenylyltransferase from Teredinibacter turnerae (strain ATCC 39867 / T7901).